The following is a 257-amino-acid chain: Pyridoxine 5'-phosphate synthase (257 aa).

Asn6 contributes to the 3-amino-2-oxopropyl phosphate binding site. 8 to 9 (DH) contributes to the 1-deoxy-D-xylulose 5-phosphate binding site. Arg17 is a binding site for 3-amino-2-oxopropyl phosphate. His41 functions as the Proton acceptor in the catalytic mechanism. Positions 43 and 48 each coordinate 1-deoxy-D-xylulose 5-phosphate. Residue Glu68 is the Proton acceptor of the active site. Thr98 contacts 1-deoxy-D-xylulose 5-phosphate. His210 acts as the Proton donor in catalysis. Residues Gly211 and 232–233 (GQ) each bind 3-amino-2-oxopropyl phosphate.

This sequence belongs to the PNP synthase family. Homooctamer; tetramer of dimers.

It is found in the cytoplasm. The catalysed reaction is 3-amino-2-oxopropyl phosphate + 1-deoxy-D-xylulose 5-phosphate = pyridoxine 5'-phosphate + phosphate + 2 H2O + H(+). It functions in the pathway cofactor biosynthesis; pyridoxine 5'-phosphate biosynthesis; pyridoxine 5'-phosphate from D-erythrose 4-phosphate: step 5/5. Functionally, catalyzes the complicated ring closure reaction between the two acyclic compounds 1-deoxy-D-xylulose-5-phosphate (DXP) and 3-amino-2-oxopropyl phosphate (1-amino-acetone-3-phosphate or AAP) to form pyridoxine 5'-phosphate (PNP) and inorganic phosphate. This Campylobacter jejuni subsp. jejuni serotype O:2 (strain ATCC 700819 / NCTC 11168) protein is Pyridoxine 5'-phosphate synthase.